A 355-amino-acid polypeptide reads, in one-letter code: Ubiquinone biosynthesis protein COQ4 homolog, mitochondrial (355 aa).

Zn(2+) contacts are provided by histidine 134, aspartate 135, histidine 138, and glutamate 150.

Belongs to the COQ4 family. As to quaternary structure, component of a multi-subunit COQ enzyme complex. The cofactor is Zn(2+).

The protein localises to the mitochondrion inner membrane. The catalysed reaction is a 4-hydroxy-3-methoxy-5-(all-trans-polyprenyl)benzoate + H(+) = a 2-methoxy-6-(all-trans-polyprenyl)phenol + CO2. Its pathway is cofactor biosynthesis; ubiquinone biosynthesis. In terms of biological role, lyase that catalyzes the C1-decarboxylation of 4-hydroxy-3-methoxy-5-(all-trans-polyprenyl)benzoic acid into 2-methoxy-6-(all-trans-polyprenyl)phenol during ubiquinone biosynthesis. In Plasmodium chabaudi chabaudi, this protein is Ubiquinone biosynthesis protein COQ4 homolog, mitochondrial.